Consider the following 193-residue polypeptide: Glycerol-3-phosphate acyltransferase (193 aa).

Transmembrane regions (helical) follow at residues 2–22 (LIAL…GLIV), 76–96 (VPIH…FPVF), 112–132 (LLFY…VFLF), and 152–172 (CLFV…AFVI).

Belongs to the PlsY family. As to quaternary structure, probably interacts with PlsX.

It localises to the cell membrane. It carries out the reaction an acyl phosphate + sn-glycerol 3-phosphate = a 1-acyl-sn-glycero-3-phosphate + phosphate. The protein operates within lipid metabolism; phospholipid metabolism. Functionally, catalyzes the transfer of an acyl group from acyl-phosphate (acyl-PO(4)) to glycerol-3-phosphate (G3P) to form lysophosphatidic acid (LPA). This enzyme utilizes acyl-phosphate as fatty acyl donor, but not acyl-CoA or acyl-ACP. The chain is Glycerol-3-phosphate acyltransferase from Bacillus velezensis (strain DSM 23117 / BGSC 10A6 / LMG 26770 / FZB42) (Bacillus amyloliquefaciens subsp. plantarum).